Reading from the N-terminus, the 443-residue chain is tRNA-2-methylthio-N(6)-dimethylallyladenosine synthase (443 aa).

The MTTase N-terminal domain maps to 12–126 (KTFRVKSFGC…LPEMVADAAA (115 aa)). Residues Cys-21, Cys-57, Cys-89, Cys-162, Cys-166, and Cys-169 each contribute to the [4Fe-4S] cluster site. The 233-residue stretch at 148-380 (RKSAPTAFLT…QAALNRDQLA (233 aa)) folds into the Radical SAM core domain. In terms of domain architecture, TRAM spans 383–443 (KASVGKTCEV…GPNSISGRLA (61 aa)).

It belongs to the methylthiotransferase family. MiaB subfamily. In terms of assembly, monomer. Requires [4Fe-4S] cluster as cofactor.

It localises to the cytoplasm. The catalysed reaction is N(6)-dimethylallyladenosine(37) in tRNA + (sulfur carrier)-SH + AH2 + 2 S-adenosyl-L-methionine = 2-methylsulfanyl-N(6)-dimethylallyladenosine(37) in tRNA + (sulfur carrier)-H + 5'-deoxyadenosine + L-methionine + A + S-adenosyl-L-homocysteine + 2 H(+). Its function is as follows. Catalyzes the methylthiolation of N6-(dimethylallyl)adenosine (i(6)A), leading to the formation of 2-methylthio-N6-(dimethylallyl)adenosine (ms(2)i(6)A) at position 37 in tRNAs that read codons beginning with uridine. The polypeptide is tRNA-2-methylthio-N(6)-dimethylallyladenosine synthase (Novosphingobium aromaticivorans (strain ATCC 700278 / DSM 12444 / CCUG 56034 / CIP 105152 / NBRC 16084 / F199)).